Here is a 549-residue protein sequence, read N- to C-terminus: Undecaprenyl phosphate-alpha-4-amino-4-deoxy-L-arabinose arabinosyl transferase (549 aa).

12 helical membrane-spanning segments follow: residues 9–29, 80–100, 112–132, 133–153, 176–196, 204–224, 256–276, 288–308, 312–332, 346–366, 376–396, and 402–422; these read LLLI…GLWI, LFGV…LAYL, SLAC…SGYA, NLDP…WHAL, FLTK…PYML, LLGY…PWAL, PWWF…GLLP, QAPV…FSLS, LPTY…HALV, NGLL…YLQL, FELF…LAQW, and AWAA…AAMP.

Belongs to the glycosyltransferase 83 family.

The protein resides in the cell inner membrane. The catalysed reaction is 4-amino-4-deoxy-alpha-L-arabinopyranosyl di-trans,octa-cis-undecaprenyl phosphate + lipid IVA = lipid IIA + di-trans,octa-cis-undecaprenyl phosphate.. Its pathway is lipopolysaccharide metabolism; 4-amino-4-deoxy-beta-L-arabinose-lipid A biosynthesis. In terms of biological role, catalyzes the transfer of the L-Ara4N moiety of the glycolipid undecaprenyl phosphate-alpha-L-Ara4N to lipid A. The modified arabinose is attached to lipid A and is required for resistance to polymyxin and cationic antimicrobial peptides. The chain is Undecaprenyl phosphate-alpha-4-amino-4-deoxy-L-arabinose arabinosyl transferase from Pseudomonas aeruginosa (strain LESB58).